The chain runs to 220 residues: tRNA (guanine-N(7)-)-methyltransferase (220 aa).

S-adenosyl-L-methionine is bound by residues E44, E69, D96, and D118. The active site involves D118. A substrate-binding site is contributed by K122. Residues 124–129 (RHEKRR) are interaction with RNA. Substrate contacts are provided by residues D154 and 191 to 194 (TEYE).

It belongs to the class I-like SAM-binding methyltransferase superfamily. TrmB family.

It catalyses the reaction guanosine(46) in tRNA + S-adenosyl-L-methionine = N(7)-methylguanosine(46) in tRNA + S-adenosyl-L-homocysteine. It functions in the pathway tRNA modification; N(7)-methylguanine-tRNA biosynthesis. In terms of biological role, catalyzes the formation of N(7)-methylguanine at position 46 (m7G46) in tRNA. This is tRNA (guanine-N(7)-)-methyltransferase from Halalkalibacterium halodurans (strain ATCC BAA-125 / DSM 18197 / FERM 7344 / JCM 9153 / C-125) (Bacillus halodurans).